A 312-amino-acid chain; its full sequence is Tyrosine recombinase XerC (312 aa).

The Core-binding (CB) domain maps to 1–103 (MISAFYAFLD…AIKSFSQYCI (103 aa)). In terms of domain architecture, Tyr recombinase spans 124–306 (ELPSPITYEQ…SMKLKKQTHE (183 aa)). Residues R164, K188, H258, R261, and H284 contribute to the active site. Y293 serves as the catalytic O-(3'-phospho-DNA)-tyrosine intermediate.

This sequence belongs to the 'phage' integrase family. XerC subfamily. Forms a cyclic heterotetrameric complex composed of two molecules of XerC and two molecules of XerD.

It localises to the cytoplasm. Site-specific tyrosine recombinase, which acts by catalyzing the cutting and rejoining of the recombining DNA molecules. The XerC-XerD complex is essential to convert dimers of the bacterial chromosome into monomers to permit their segregation at cell division. It also contributes to the segregational stability of plasmids. The protein is Tyrosine recombinase XerC of Chlamydia caviae (strain ATCC VR-813 / DSM 19441 / 03DC25 / GPIC) (Chlamydophila caviae).